We begin with the raw amino-acid sequence, 261 residues long: MQLNSSSFHPHHFTCDTTRYSEEQVACICEALSNDARKLSQFVWTVLERDEMRNNQYILKAQAFLAFHSNNFKELYRIIESHHFASEHHLPLQEWWLNAHYHEAEKIRGRQLGAVGKYRIRRKYPLPRTIWDGEETSYCFRDKSRVLLRDWYCRNSYPSPREKRELAEKTHLTVTQVSNWFKNRRQRDRAGVPEPKDCLKDISEEEDLKLIRKTASKLSNSFHNPSDLSSYSAAAAAATFPGFYMNYNDMMIGAGTSYQSL.

A DNA-binding region (homeobox) is located at residues 133–192 (GEETSYCFRDKSRVLLRDWYCRNSYPSPREKRELAEKTHLTVTQVSNWFKNRRQRDRAGV).

This sequence belongs to the SIX/Sine oculis homeobox family.

It localises to the nucleus. The polypeptide is Homeobox protein ceh-33 (ceh-33) (Caenorhabditis elegans).